Consider the following 115-residue polypeptide: MKNKFVELVEKSQLRTDLPEFNPGDSITVNLWIKEGDKQRIQAFKGFVLRKRNRGLHSAFTVRKMSSGMGVERTFQTHSPLIDSIIVEKRADVRRAKLYYMRGLTGRAARIKEKV.

It belongs to the bacterial ribosomal protein bL19 family.

In terms of biological role, this protein is located at the 30S-50S ribosomal subunit interface and may play a role in the structure and function of the aminoacyl-tRNA binding site. The protein is Large ribosomal subunit protein bL19 of Francisella tularensis subsp. tularensis (strain FSC 198).